The chain runs to 130 residues: Small ribosomal subunit protein uS8 (130 aa).

This sequence belongs to the universal ribosomal protein uS8 family. Part of the 30S ribosomal subunit. Contacts proteins S5 and S12.

Functionally, one of the primary rRNA binding proteins, it binds directly to 16S rRNA central domain where it helps coordinate assembly of the platform of the 30S subunit. The polypeptide is Small ribosomal subunit protein uS8 (Pseudomonas fluorescens (strain ATCC BAA-477 / NRRL B-23932 / Pf-5)).